The chain runs to 371 residues: Neuropeptide Y receptor type 6 (371 aa).

At 1 to 31 (MEVLTNQPTPNKTSGKSNNSAFFYFESCQPP) the chain is on the extracellular side. N-linked (GlcNAc...) asparagine glycosylation is found at asparagine 11 and asparagine 18. The helical transmembrane segment at 32 to 52 (FLAILLLLIAYTVILIMGIFG) threads the bilayer. The Cytoplasmic segment spans residues 53–82 (NLSLIIIIFKKQREAQNVTNILIANLSLSD). Residues 83–103 (ILVCVMCIPFTVIYTLMDHWV) form a helical membrane-spanning segment. The Extracellular segment spans residues 104 to 111 (FGNTMCKL). A disulfide bridge links cysteine 109 with cysteine 196. The chain crosses the membrane as a helical span at residues 112-132 (TSYVQSVSVSVSIFSLVLIAI). Over 133–150 (ERYQLIVNPRGWKPRVAH) the chain is Cytoplasmic. Residues 151–171 (AYWGIILIWLISLTLSIPLFL) form a helical membrane-spanning segment. Residues 172-206 (SYHLTNEPFHNLSLPTDIYTHQVACVEIWPSKLNQ) are Extracellular-facing. The N-linked (GlcNAc...) asparagine glycan is linked to asparagine 182. A helical transmembrane segment spans residues 207–227 (LLFSTSLFMLQYFVPLGFILI). At 228-263 (CYLKIVLCLRKRTRQVDRRKENKSRLNENKRVNVML) the chain is on the cytoplasmic side. Residues 264–284 (ISIVVTFGACWLPLNIFNVIF) traverse the membrane as a helical segment. Over 285–297 (DWYHEMLMSCHHD) the chain is Extracellular. The helical transmembrane segment at 298–318 (LVFVVCHLIAMVSTCINPLFY) threads the bilayer. Residues 319-371 (GFLNKNFQKDLMMLIHHCWCGEPQESYENIAMSTMHTDESKGSLKLAHIPTGI) are Cytoplasmic-facing. Residue cysteine 336 is the site of S-palmitoyl cysteine attachment.

The protein belongs to the G-protein coupled receptor 1 family. Kidney and discrete regions of the hypothalamus including the suprachiasmatic nucleus, anterior hypothalamus, bed nucleus stria terminalis, and the ventromedial nucleus.

Its subcellular location is the cell membrane. Functionally, receptor for neuropeptide Y and peptide YY. The rank order of affinity of this receptor for pancreatic polypeptides is NPY = PYY &gt;= NPY (2-36) = [Leu-31, Pro-34] NPY &gt; NPY (13-36) &gt; PP. The activity of this receptor is mediated by G proteins that inhibits adenylate cyclase activity. This Mus musculus (Mouse) protein is Neuropeptide Y receptor type 6 (Npy6r).